Reading from the N-terminus, the 311-residue chain is MTKPAVQKNGLHPRNRHRDRYDFPTLKHSYPALIPFVTVNAYGDESVDFANPEAVKTLNQALLQHFYQIEHWEIPDGFLCPPIPGRADYIHHLADLLAEDNRAVVPREASVLDIGCGANCIYPLIGYREYGWRFTGSEINPIAMKAANQTIEANPGLNRAIRLRRQKSSTAILAGIIHKNETFDAVMCNPPFHASAEDARQGSQRKLHNLGLDKRSPLNFGGQQDELWCEGGESAFIGQMIKESAGFARQCLWFTSLVSRKENLPEIYRALEAVDAEKVRTIDMAQGQKQSRFVAWSFLDTAARTRWLQKR.

The protein belongs to the methyltransferase superfamily. METTL16/RlmF family.

It localises to the cytoplasm. The catalysed reaction is adenosine(1618) in 23S rRNA + S-adenosyl-L-methionine = N(6)-methyladenosine(1618) in 23S rRNA + S-adenosyl-L-homocysteine + H(+). Functionally, specifically methylates the adenine in position 1618 of 23S rRNA. This chain is Ribosomal RNA large subunit methyltransferase F, found in Pectobacterium carotovorum subsp. carotovorum (strain PC1).